The chain runs to 506 residues: Sodium-coupled neutral amino acid symporter 2 (506 aa).

The tract at residues Met-1–Asn-23 is disordered. The Cytoplasmic segment spans residues Met-1 to Ser-76. Positions Met-1–Met-96 are regulates protein turnover upon amino acid deprivation. A phosphoserine mark is found at Ser-12, Ser-21, Ser-22, and Ser-55. Residues Val-77–Met-96 traverse the membrane as a helical segment. Asn-82 provides a ligand contact to Na(+). Topologically, residues Ala-97–Ala-102 are extracellular. A helical membrane pass occupies residues Leu-103–Leu-123. Topologically, residues Lys-124–Asn-158 are cytoplasmic. Residues Ile-159 to Ile-177 traverse the membrane as a helical segment. The Extracellular segment spans residues Gln-178–Gly-188. A helical transmembrane segment spans residues Leu-189–Leu-209. Over Ser-210–Tyr-217 the chain is Cytoplasmic. The helical transmembrane segment at Leu-218–Cys-238 threads the bilayer. The Extracellular portion of the chain corresponds to Lys-239–Thr-292. Cys-245 and Cys-281 form a disulfide bridge. Asn-258 and Asn-274 each carry an N-linked (GlcNAc...) asparagine glycan. A helical membrane pass occupies residues Val-293–Tyr-313. Residues Glu-314 to Lys-329 lie on the Cytoplasmic side of the membrane. A helical membrane pass occupies residues Ile-330 to Phe-350. At Tyr-351 to Leu-371 the chain is on the extracellular side. A helical transmembrane segment spans residues Leu-372–Phe-392. Thr-386 serves as a coordination point for Na(+). The Cytoplasmic portion of the chain corresponds to Pro-393–His-413. Residues Ser-414 to Ile-434 traverse the membrane as a helical segment. Topologically, residues Arg-435–Asp-436 are extracellular. Residues Ile-437–Phe-457 form a helical membrane-spanning segment. Residues Tyr-458–Lys-472 are Cytoplasmic-facing. The helical transmembrane segment at Ile-473–Leu-495 threads the bilayer. The Extracellular segment spans residues Asp-496–His-506.

The protein belongs to the amino acid/polyamine transporter 2 family. In terms of processing, polyubiquitination by NEDD4L regulates the degradation and the activity of SLC38A2.

The protein localises to the cell membrane. The enzyme catalyses L-alanine(in) + Na(+)(in) = L-alanine(out) + Na(+)(out). It catalyses the reaction glycine(in) + Na(+)(in) = glycine(out) + Na(+)(out). It carries out the reaction L-serine(in) + Na(+)(in) = L-serine(out) + Na(+)(out). The catalysed reaction is L-proline(in) + Na(+)(in) = L-proline(out) + Na(+)(out). The enzyme catalyses L-methionine(in) + Na(+)(in) = L-methionine(out) + Na(+)(out). It catalyses the reaction L-histidine(in) + Na(+)(in) = L-histidine(out) + Na(+)(out). It carries out the reaction L-asparagine(in) + Na(+)(in) = L-asparagine(out) + Na(+)(out). The catalysed reaction is L-glutamine(in) + Na(+)(in) = L-glutamine(out) + Na(+)(out). The enzyme catalyses L-threonine(in) + Na(+)(in) = L-threonine(out) + Na(+)(out). It catalyses the reaction L-leucine(in) + Na(+)(in) = L-leucine(out) + Na(+)(out). It carries out the reaction L-phenylalanine(in) + Na(+)(in) = L-phenylalanine(out) + Na(+)(out). With respect to regulation, inhibited by N-methyl-D-glucamine. Inhibited by choline. Allosteric regulation of sodium ions binding by pH. Its function is as follows. Symporter that cotransports neutral amino acids and sodium ions from the extracellular to the intracellular side of the cell membrane. The transport is pH-sensitive, Li(+)-intolerant, electrogenic, driven by the Na(+) electrochemical gradient and cotransports of neutral amino acids and sodium ions with a stoichiometry of 1:1. May function in the transport of amino acids at the blood-brain barrier. May function in the transport of amino acids in the supply of maternal nutrients to the fetus through the placenta. Maintains a key metabolic glutamine/glutamate balance underpinning retrograde signaling by dendritic release of the neurotransmitter glutamate. Transports L-proline in differentiating osteoblasts for the efficient synthesis of proline-enriched proteins and provides proline essential for osteoblast differentiation and bone formation during bone development. In Pan paniscus (Pygmy chimpanzee), this protein is Sodium-coupled neutral amino acid symporter 2.